The primary structure comprises 281 residues: Para-Rep C9 (281 aa).

Residues M1–L95 enclose the CRESS-DNA virus Rep endonuclease domain. Positions V7 to L10 match the RCR-1 motif. A divalent metal cation-binding residues include E33 and H39. Positions H39–Q41 match the RCR-2 motif. The short motif at K48 to K69 is the Nuclear localization signal element. Y78 functions as the For DNA cleavage activity in the catalytic mechanism. The short motif at Y78–K81 is the RCR-3 element. E83 lines the a divalent metal cation pocket. The short motif at L95–H101 is the Nuclear localization signal element. G178–S180 serves as a coordination point for ATP.

This sequence belongs to the nanoviridea/circoviridae replication-associated protein family. Homooligomer (Potential). Rep binds to repeated DNA motifs (iterons). Requires Mg(2+) as cofactor. It depends on Mn(2+) as a cofactor.

It is found in the host nucleus. The enzyme catalyses ATP + H2O = ADP + phosphate + H(+). Its function is as follows. Initiates and terminates the replication only of its own subviral DNA molecule. The closed circular ssDNA genome is first converted to a superhelical dsDNA. Rep binds a specific hairpin at the genome origin of replication. Introduces an endonucleolytic nick within the intergenic region of the genome, thereby initiating the rolling circle replication (RCR). Following cleavage, binds covalently to the 5'-phosphate of DNA as a tyrosyl ester. The cleavage gives rise to a free 3'-OH that serves as a primer for the cellular DNA polymerase. The polymerase synthesizes the (+) strand DNA by rolling circle mechanism. After one round of replication, a Rep-catalyzed nucleotidyl transfer reaction releases a circular single-stranded virus genome, thereby terminating the replication. Displays origin-specific DNA cleavage, nucleotidyl transferase, ATPase and helicase activities. This chain is Para-Rep C9 (C9), found in Faba bean necrotic yellows C9 alphasatellite (FBNYC9A).